Here is a 322-residue protein sequence, read N- to C-terminus: Malate dehydrogenase (322 aa).

NAD(+) contacts are provided by residues 10–15 (GSGQIG) and Asp-34. Substrate-binding residues include Arg-83 and Arg-89. Residues Asn-96 and 119-121 (ITN) each bind NAD(+). 2 residues coordinate substrate: Asn-121 and Arg-152. The active-site Proton acceptor is the His-176.

This sequence belongs to the LDH/MDH superfamily. MDH type 3 family.

It carries out the reaction (S)-malate + NAD(+) = oxaloacetate + NADH + H(+). Catalyzes the reversible oxidation of malate to oxaloacetate. The protein is Malate dehydrogenase of Bradyrhizobium sp. (strain ORS 278).